The following is a 465-amino-acid chain: uncharacterized protein (465 aa).

In terms of domain architecture, TRAM spans 13–71; that stretch reads GPRPGLRLELQAIDLDRDGHGLARWQGWVVVVPGLLPGERAKVQLQQRQKSRWLSRISE. 4 residues coordinate [4Fe-4S] cluster: C84, C90, C93, and C171. S-adenosyl-L-methionine-binding residues include Q294, Y324, E345, and D391. The Nucleophile role is filled by C418.

The protein belongs to the class I-like SAM-binding methyltransferase superfamily. RNA M5U methyltransferase family.

This is an uncharacterized protein from Parasynechococcus marenigrum (strain WH8102).